The following is a 506-amino-acid chain: tRNA (guanine(6)-N(2))-methyltransferase THUMP3 (506 aa).

Residues K144 to V172 form a disordered region. The segment covering Q157 to V172 has biased composition (basic and acidic residues). One can recognise a THUMP domain in the interval K170–L286.

This sequence belongs to the methyltransferase superfamily. Part of the heterodimeric THUMPD3-TRM112 methyltransferase complex; this complex forms an active tRNA methyltransferase, where TRMT112 acts as an activator of the catalytic subunit THUMPD3.

The protein localises to the cytoplasm. The enzyme catalyses guanosine(6) in tRNA + S-adenosyl-L-methionine = N(2)-methylguanosine(6) in tRNA + S-adenosyl-L-homocysteine + H(+). It carries out the reaction guanosine(7) in tRNA + S-adenosyl-L-methionine = N(2)-methylguanosine(7) in tRNA + S-adenosyl-L-homocysteine + H(+). Its function is as follows. Catalytic subunit of the THUMPD3-TRM112 methyltransferase complex, that specifically mediates the S-adenosyl-L-methionine-dependent N(2)-methylation of guanosine nucleotide at position 6 (m2G6) in tRNAs. This is one of the major tRNA (guanine-N(2))-methyltransferases. Also catalyzes the S-adenosyl-L-methionine-dependent N(2)-methylation of guanosine nucleotide at position 7 of tRNA(Trp). The protein is tRNA (guanine(6)-N(2))-methyltransferase THUMP3 of Bos taurus (Bovine).